The following is a 314-amino-acid chain: Probable cell division protein WhiA (314 aa).

Residues 274 to 308 (SLKELGEMMSTGKISKSGVNHRLRKLNEMADKLRS) constitute a DNA-binding region (H-T-H motif).

The protein belongs to the WhiA family.

Functionally, involved in cell division and chromosome segregation. This is Probable cell division protein WhiA from Staphylococcus saprophyticus subsp. saprophyticus (strain ATCC 15305 / DSM 20229 / NCIMB 8711 / NCTC 7292 / S-41).